Consider the following 742-residue polypeptide: Synaptic vesicle glycoprotein 2A (742 aa).

The segment at 1–57 (MEEGFRDRAAFIRGAKDIAKEVKKHAAKKVVKGLDRVQDEYSRRSYSRFEEEDDDDD) is interaction with SYT1. Residues 1–169 (MEEGFRDRAA…GHGRFQWTLY (169 aa)) lie on the Cytoplasmic side of the membrane. The segment covering 33 to 49 (GLDRVQDEYSRRSYSRF) has biased composition (basic and acidic residues). The disordered stretch occupies residues 33-144 (GLDRVQDEYS…GRGEAQRRKE (112 aa)). Residues Ser-80 and Ser-81 each carry the phosphoserine modification. Position 84 is a phosphothreonine (Thr-84). Gly residues predominate over residues 122-137 (VRGGLSDGEGPPGGRG). At Ser-127 the chain carries Phosphoserine. A helical transmembrane segment spans residues 170 to 190 (FVLGLALMADGVEVFVVGFVL). Residues 191–205 (PSAEKDMCLSDSNKG) lie on the Extracellular side of the membrane. The chain crosses the membrane as a helical span at residues 206-226 (MLGLIVYLGMMVGAFLWGGLA). Topologically, residues 227 to 233 (DRLGRRQ) are cytoplasmic. The chain crosses the membrane as a helical span at residues 234-254 (CLLISLSVNSVFAFFSSFVQG). Topologically, residues 255-262 (YGTFLFCR) are extracellular. A helical membrane pass occupies residues 263-283 (LLSGVGIGGSIPIVFSYFSEF). Topologically, residues 284 to 294 (LAQEKRGEHLS) are cytoplasmic. A helical transmembrane segment spans residues 295–315 (WLCMFWMIGGVYAAAMAWAII). Topologically, residues 316-334 (PHYGWSFQMGSAYQFHSWR) are extracellular. A helical membrane pass occupies residues 335–355 (VFVLVCAFPSVFAIGALTTQP). Residues 356-447 (ESPRFFLENG…CFGPEYRRIT (92 aa)) are Cytoplasmic-facing. Ser-393 is subject to Phosphoserine. A helical transmembrane segment spans residues 448–468 (LMMMGVWFTMSFSYYGLTVWF). The Extracellular portion of the chain corresponds to 469–598 (PDMIRHLQAV…GTGEGAYMVY (130 aa)). A Phosphotyrosine modification is found at Tyr-480. Asn-498, Asn-548, and Asn-573 each carry an N-linked (GlcNAc...) asparagine glycan. Residues 599–619 (FVSFLGTLAVLPGNIVSALLM) form a helical membrane-spanning segment. Residues 620–626 (DKIGRLR) lie on the Cytoplasmic side of the membrane. A helical membrane pass occupies residues 627–647 (MLAGSSVMSCVSCFFLSFGNS). Over 648-651 (ESAM) the chain is Extracellular. Residues 652–672 (IALLCLFGGVSIASWNALDVL) form a helical membrane-spanning segment. Residues 673–685 (TVELYPSDKRTTA) lie on the Cytoplasmic side of the membrane. The chain crosses the membrane as a helical span at residues 686–708 (FGFLNALCKLAAVLGISIFTSFV). The Extracellular portion of the chain corresponds to 709-712 (GITK). Residues 713–731 (AAPILFASAALALGSSLAL) form a helical membrane-spanning segment. The Cytoplasmic segment spans residues 732 to 742 (KLPETRGQVLQ).

Belongs to the major facilitator superfamily. As to quaternary structure, interacts with SYT1/synaptotagmin-1 in a calcium-dependent manner. Binds the adapter protein complex AP-2. (Microbial infection) Interacts with C.botulinum neurotoxin type A2 (BoNT/A, botA). Interaction is improved by glycosylation of SV2. In terms of processing, phosphorylation by CK1 of the N-terminal cytoplasmic domain regulates interaction with SYT1. Post-translationally, N-glycosylated.

The protein resides in the presynapse. It localises to the cytoplasmic vesicle. Its subcellular location is the secretory vesicle. The protein localises to the synaptic vesicle membrane. Its function is as follows. Plays a role in the control of regulated secretion in neural and endocrine cells, enhancing selectively low-frequency neurotransmission. Positively regulates vesicle fusion by maintaining the readily releasable pool of secretory vesicles. Functionally, (Microbial infection) Receptor for the C.botulinum neurotoxin type A2 (BoNT/A, botA); glycosylation is not essential but enhances the interaction. Probably also serves as a receptor for the closely related C.botulinum neurotoxin type A1. The sequence is that of Synaptic vesicle glycoprotein 2A (SV2A) from Homo sapiens (Human).